The chain runs to 64 residues: Alpha-conotoxin GI (64 aa).

The N-terminal stretch at 1–21 is a signal peptide; it reads MGMRMMFTVFLLVVLATTVVS. The propeptide occupies 22-49; the sequence is FPSERASDGRDDTAKDEGSDMDKLVEKK. Disulfide bonds link Cys51–Cys56 and Cys52–Cys62. At Cys62 the chain carries Cysteine amide.

This sequence belongs to the conotoxin A superfamily. Post-translationally, not hydroxylated; hydroxylation, on a synthetic hydroxylated GI, improves its folding but impairs its activity against target receptors. As to expression, expressed by the venom duct.

The protein resides in the secreted. In terms of biological role, alpha-conotoxins act on postsynaptic membranes, they bind to the nicotinic acetylcholine receptors (nAChR) and thus inhibit them. Reversibly inhibits mammalian muscle nAChR (IC(50)=339 nM on adult subtype (alpha-1-beta-1-gamma-delta/CHRNA1-CHRNB1-CHRNG-CHRND) and IC(50)=5.86-995 nM on fetal subtype (alpha-1-beta-1-delta-epsilon/CHRNA1-CHRNB1-CHRND-CHRNE)). The higher affinity site is the alpha/delta site on mouse muscle-derived BC3H-1 receptor, and the other site (alpha/gamma site) on nicotinic receptors from Torpedo californica electric organ. In Conus geographus (Geography cone), this protein is Alpha-conotoxin GI.